The primary structure comprises 487 residues: Serine/threonine-protein kinase BSK7 (487 aa).

Residue Gly2 is the site of N-myristoyl glycine attachment. Positions 59–325 constitute a Protein kinase domain; the sequence is ENIVSEHGEK…DLETPSHQLM (267 aa). ATP contacts are provided by residues 65 to 73 and Lys87; that span reads HGEKAPNVV. Asp181 (proton acceptor) is an active-site residue.

The protein belongs to the protein kinase superfamily. Ser/Thr protein kinase family.

The protein resides in the cell membrane. The catalysed reaction is L-seryl-[protein] + ATP = O-phospho-L-seryl-[protein] + ADP + H(+). The enzyme catalyses L-threonyl-[protein] + ATP = O-phospho-L-threonyl-[protein] + ADP + H(+). In terms of biological role, probable serine/threonine kinase that acts as a positive regulator of brassinosteroid (BR) signaling downstream of the receptor kinase BRI1. Functions redundantly with BSK3, BSK5, BSK6 and BSK8. The protein is Serine/threonine-protein kinase BSK7 of Arabidopsis thaliana (Mouse-ear cress).